Reading from the N-terminus, the 113-residue chain is MTMEAKAILRTARISPQKARLVADQVRGLSAERAVNLLKFSDKKAAHLIKKVVESAIANAENNQGADVDELKVKTIMVDEGPSLKRFMARAKGRGTRILKRTSHITVIVGAAK.

It belongs to the universal ribosomal protein uL22 family. In terms of assembly, part of the 50S ribosomal subunit.

Its function is as follows. This protein binds specifically to 23S rRNA; its binding is stimulated by other ribosomal proteins, e.g. L4, L17, and L20. It is important during the early stages of 50S assembly. It makes multiple contacts with different domains of the 23S rRNA in the assembled 50S subunit and ribosome. Functionally, the globular domain of the protein is located near the polypeptide exit tunnel on the outside of the subunit, while an extended beta-hairpin is found that lines the wall of the exit tunnel in the center of the 70S ribosome. The sequence is that of Large ribosomal subunit protein uL22 from Xanthomonas oryzae pv. oryzae (strain MAFF 311018).